A 173-amino-acid polypeptide reads, in one-letter code: Large ribosomal subunit protein uL16 (173 aa).

The protein belongs to the universal ribosomal protein uL16 family.

The polypeptide is Large ribosomal subunit protein uL16 (Methanosarcina mazei (strain ATCC BAA-159 / DSM 3647 / Goe1 / Go1 / JCM 11833 / OCM 88) (Methanosarcina frisia)).